We begin with the raw amino-acid sequence, 238 residues long: tRNA (guanine-N(1)-)-methyltransferase (238 aa).

Residues Gly109 and 129–134 (IGDFVL) each bind S-adenosyl-L-methionine.

This sequence belongs to the RNA methyltransferase TrmD family. Homodimer.

It is found in the cytoplasm. It carries out the reaction guanosine(37) in tRNA + S-adenosyl-L-methionine = N(1)-methylguanosine(37) in tRNA + S-adenosyl-L-homocysteine + H(+). Specifically methylates guanosine-37 in various tRNAs. This is tRNA (guanine-N(1)-)-methyltransferase from Exiguobacterium sp. (strain ATCC BAA-1283 / AT1b).